We begin with the raw amino-acid sequence, 175 residues long: Ribosome maturation factor RimM (175 aa).

The PRC barrel domain occupies 100–173 (EGEYYFHEII…IIIIRPMEGL (74 aa)).

Belongs to the RimM family. Binds ribosomal protein uS19.

It is found in the cytoplasm. Its function is as follows. An accessory protein needed during the final step in the assembly of 30S ribosomal subunit, possibly for assembly of the head region. Essential for efficient processing of 16S rRNA. May be needed both before and after RbfA during the maturation of 16S rRNA. It has affinity for free ribosomal 30S subunits but not for 70S ribosomes. The protein is Ribosome maturation factor RimM of Geobacillus thermodenitrificans (strain NG80-2).